We begin with the raw amino-acid sequence, 446 residues long: D-inositol 3-phosphate glycosyltransferase (446 aa).

Histidine 19 is a 1D-myo-inositol 3-phosphate binding site. UDP-N-acetyl-alpha-D-glucosamine is bound by residues 25-26 (QP) and glycine 33. Residues 30–35 (DAGGMN), lysine 88, tyrosine 121, threonine 145, and arginine 165 contribute to the 1D-myo-inositol 3-phosphate site. Arginine 239, lysine 244, and glutamine 303 together coordinate UDP-N-acetyl-alpha-D-glucosamine. The Mg(2+) site is built by tyrosine 312, arginine 313, and serine 315. Residues glutamate 325 and glutamate 333 each coordinate UDP-N-acetyl-alpha-D-glucosamine. Threonine 339 contacts Mg(2+).

This sequence belongs to the glycosyltransferase group 1 family. MshA subfamily. Homodimer.

It carries out the reaction 1D-myo-inositol 3-phosphate + UDP-N-acetyl-alpha-D-glucosamine = 1D-myo-inositol 2-acetamido-2-deoxy-alpha-D-glucopyranoside 3-phosphate + UDP + H(+). Catalyzes the transfer of a N-acetyl-glucosamine moiety to 1D-myo-inositol 3-phosphate to produce 1D-myo-inositol 2-acetamido-2-deoxy-glucopyranoside 3-phosphate in the mycothiol biosynthesis pathway. The protein is D-inositol 3-phosphate glycosyltransferase of Rhodococcus opacus (strain B4).